Reading from the N-terminus, the 124-residue chain is Chemotaxis protein CheY1 (124 aa).

The region spanning 2 to 120 (KLLVVDDSST…VLKEKLEVVL (119 aa)) is the Response regulatory domain. D7, D8, D53, and N55 together coordinate Mg(2+). D53 is modified (4-aspartylphosphate).

As to quaternary structure, interacts (when phosphorylated) with FliM. Mg(2+) serves as cofactor. Phosphorylated by CheAY. Dephosphorylated (inactivated) by CheZ.

It is found in the cytoplasm. Its function is as follows. Chemotactic response regulator protein that modulates the rotation direction of bacterial flagellar motors. Plays an important role in the colonization and infection of Helicobacter pylori. Upon phosphorylation by CheA, interacts with the flagellar motor protein FliM to cause clockwise flagellar rotation and bacterial reversals, as opposed to straight swimming when CheY1 is not phosphorylated. The protein is Chemotaxis protein CheY1 (cheY1) of Helicobacter pylori (strain J99 / ATCC 700824) (Campylobacter pylori J99).